The chain runs to 408 residues: Phosphoenolpyruvate/phosphate translocator 1, chloroplastic (408 aa).

Residues 1 to 66 (MQSAAAVGLL…ISARRIGLVP (66 aa)) constitute a chloroplast transit peptide. A run of 7 helical transmembrane segments spans residues 105 to 125 (TLQL…FNIY), 139 to 159 (ITNV…ITGI), 165 to 185 (ISGA…MGNL), 222 to 242 (PTPF…LASL), 245 to 262 (ASFN…NVTF), 283 to 303 (ITLF…VTLL), and 375 to 395 (TPVS…VFLY). One can recognise an EamA domain in the interval 124–241 (IYNKQVLKVF…PIVGGVALAS (118 aa)).

It belongs to the TPT transporter family. PPT (TC 2.A.7.9) subfamily.

The protein localises to the plastid. The protein resides in the chloroplast membrane. Phosphoenolpyruvate/phosphate translocator that transports phosphoenolpyruvate (PEP) and dihydroxyacetone phosphate. The sequence is that of Phosphoenolpyruvate/phosphate translocator 1, chloroplastic (PPT1) from Oryza sativa subsp. japonica (Rice).